The sequence spans 89 residues: Small ribosomal subunit protein uS15 (89 aa).

This sequence belongs to the universal ribosomal protein uS15 family. As to quaternary structure, part of the 30S ribosomal subunit. Forms a bridge to the 50S subunit in the 70S ribosome, contacting the 23S rRNA.

Functionally, one of the primary rRNA binding proteins, it binds directly to 16S rRNA where it helps nucleate assembly of the platform of the 30S subunit by binding and bridging several RNA helices of the 16S rRNA. Forms an intersubunit bridge (bridge B4) with the 23S rRNA of the 50S subunit in the ribosome. The protein is Small ribosomal subunit protein uS15 of Thermosynechococcus vestitus (strain NIES-2133 / IAM M-273 / BP-1).